The sequence spans 386 residues: Synaptotagmin-5 (386 aa).

Pro residues predominate over residues 1 to 16; the sequence is MFPEPPTPGSPAPETP. The segment at 1-21 is disordered; that stretch reads MFPEPPTPGSPAPETPPDSSR. Residues 1–24 are Vesicular-facing; the sequence is MFPEPPTPGSPAPETPPDSSRIRQ. The chain crosses the membrane as a helical span at residues 25 to 45; the sequence is GAVPAWVLATILLGSGLLVFS. Topologically, residues 46–386 are cytoplasmic; that stretch reads SCFCLYRKRC…PDRARPIPAP (341 aa). C2 domains are found at residues 108–227 and 239–372; these read QLGR…QAWR and KLGD…AQWH. Residues L138, D139, D145, D197, F198, D199, S202, D205, D270, D276, D330, and D332 each contribute to the Ca(2+) site.

Belongs to the synaptotagmin family. Homodimer. Interacts with both alpha- and beta-tubulin. Requires Ca(2+) as cofactor. Expressed in kidney, adipose tissue, lung and heart, as well as at higher levels in brain.

The protein resides in the cytoplasmic vesicle. It is found in the secretory vesicle. Its subcellular location is the synaptic vesicle membrane. It localises to the recycling endosome membrane. In terms of biological role, may be involved in Ca(2+)-dependent exocytosis of secretory vesicles through Ca(2+) and phospholipid binding to the C2 domain or may serve as Ca(2+) sensors in the process of vesicular trafficking and exocytosis. Regulates the Ca(2+)-dependent secretion of norepinephrine in PC12 cells. Required for export from the endocytic recycling compartment to the cell surface. The polypeptide is Synaptotagmin-5 (Syt5) (Rattus norvegicus (Rat)).